A 373-amino-acid chain; its full sequence is 4-hydroxy-3-methylbut-2-en-1-yl diphosphate synthase (flavodoxin) (373 aa).

Positions 270, 273, 305, and 312 each coordinate [4Fe-4S] cluster.

It belongs to the IspG family. The cofactor is [4Fe-4S] cluster.

It catalyses the reaction (2E)-4-hydroxy-3-methylbut-2-enyl diphosphate + oxidized [flavodoxin] + H2O + 2 H(+) = 2-C-methyl-D-erythritol 2,4-cyclic diphosphate + reduced [flavodoxin]. It participates in isoprenoid biosynthesis; isopentenyl diphosphate biosynthesis via DXP pathway; isopentenyl diphosphate from 1-deoxy-D-xylulose 5-phosphate: step 5/6. Functionally, converts 2C-methyl-D-erythritol 2,4-cyclodiphosphate (ME-2,4cPP) into 1-hydroxy-2-methyl-2-(E)-butenyl 4-diphosphate. The sequence is that of 4-hydroxy-3-methylbut-2-en-1-yl diphosphate synthase (flavodoxin) from Sodalis glossinidius (strain morsitans).